The chain runs to 524 residues: 2-isopropylmalate synthase (524 aa).

The 263-residue stretch at 5 to 267 (VIIFDTTLRD…HTNINHQEIF (263 aa)) folds into the Pyruvate carboxyltransferase domain. Asp-14, His-202, His-204, and Asn-238 together coordinate Mn(2+). Residues 392–524 (SLDYFSVQSG…SKHQNNQETV (133 aa)) are regulatory domain.

The protein belongs to the alpha-IPM synthase/homocitrate synthase family. LeuA type 1 subfamily. As to quaternary structure, homodimer. Mn(2+) serves as cofactor.

The protein localises to the cytoplasm. It carries out the reaction 3-methyl-2-oxobutanoate + acetyl-CoA + H2O = (2S)-2-isopropylmalate + CoA + H(+). It participates in amino-acid biosynthesis; L-leucine biosynthesis; L-leucine from 3-methyl-2-oxobutanoate: step 1/4. In terms of biological role, catalyzes the condensation of the acetyl group of acetyl-CoA with 3-methyl-2-oxobutanoate (2-ketoisovalerate) to form 3-carboxy-3-hydroxy-4-methylpentanoate (2-isopropylmalate). The chain is 2-isopropylmalate synthase from Serratia proteamaculans (strain 568).